The sequence spans 430 residues: Glutamate-1-semialdehyde 2,1-aminomutase 2 (430 aa).

Position 269 is an N6-(pyridoxal phosphate)lysine (Lys-269).

The protein belongs to the class-III pyridoxal-phosphate-dependent aminotransferase family. HemL subfamily. As to quaternary structure, homodimer. Pyridoxal 5'-phosphate is required as a cofactor.

Its subcellular location is the cytoplasm. The catalysed reaction is (S)-4-amino-5-oxopentanoate = 5-aminolevulinate. The protein operates within porphyrin-containing compound metabolism; protoporphyrin-IX biosynthesis; 5-aminolevulinate from L-glutamyl-tRNA(Glu): step 2/2. This Bacillus pumilus (strain SAFR-032) protein is Glutamate-1-semialdehyde 2,1-aminomutase 2.